Here is a 286-residue protein sequence, read N- to C-terminus: Diaminopimelate epimerase (286 aa).

Substrate is bound by residues asparagine 12 and asparagine 67. The active-site Proton donor is the cysteine 76. Residues 77 to 78 (GN), asparagine 165, asparagine 198, and 216 to 217 (ER) each bind substrate. Cysteine 225 serves as the catalytic Proton acceptor. 226–227 (GT) is a substrate binding site.

Belongs to the diaminopimelate epimerase family. In terms of assembly, homodimer.

Its subcellular location is the cytoplasm. The catalysed reaction is (2S,6S)-2,6-diaminopimelate = meso-2,6-diaminopimelate. The protein operates within amino-acid biosynthesis; L-lysine biosynthesis via DAP pathway; DL-2,6-diaminopimelate from LL-2,6-diaminopimelate: step 1/1. Catalyzes the stereoinversion of LL-2,6-diaminopimelate (L,L-DAP) to meso-diaminopimelate (meso-DAP), a precursor of L-lysine. This Methanothermobacter thermautotrophicus (strain ATCC 29096 / DSM 1053 / JCM 10044 / NBRC 100330 / Delta H) (Methanobacterium thermoautotrophicum) protein is Diaminopimelate epimerase.